We begin with the raw amino-acid sequence, 163 residues long: uncharacterized protein (163 aa).

The segment covering 1–10 has biased composition (basic and acidic residues); it reads MTHPLPHDSH. Disordered stretches follow at residues 1-21 and 71-112; these read MTHP…VNKS and SKQP…EQRR. Polar residues predominate over residues 90–105; the sequence is PASSLQDHSRLTSLSR.

This is an uncharacterized protein from Homo sapiens (Human).